Consider the following 382-residue polypeptide: ATP phosphoribosyltransferase regulatory subunit (382 aa).

The protein belongs to the class-II aminoacyl-tRNA synthetase family. HisZ subfamily. As to quaternary structure, heteromultimer composed of HisG and HisZ subunits.

The protein resides in the cytoplasm. The protein operates within amino-acid biosynthesis; L-histidine biosynthesis; L-histidine from 5-phospho-alpha-D-ribose 1-diphosphate: step 1/9. In terms of biological role, required for the first step of histidine biosynthesis. May allow the feedback regulation of ATP phosphoribosyltransferase activity by histidine. This Acidovorax sp. (strain JS42) protein is ATP phosphoribosyltransferase regulatory subunit.